Reading from the N-terminus, the 161-residue chain is Cytochrome c-type biogenesis protein CcmE (161 aa).

The Cytoplasmic portion of the chain corresponds to 1–13 (MSWLPKSPKARRR). The chain crosses the membrane as a helical; Signal-anchor for type II membrane protein span at residues 14 to 34 (LMLVAAIAPVLAVAAGLTLWG). Residues 35–161 (LSDSISFFYT…QRPEHQGDAL (127 aa)) are Periplasmic-facing. Heme contacts are provided by histidine 128 and tyrosine 132.

The protein belongs to the CcmE/CycJ family.

The protein localises to the cell inner membrane. Its function is as follows. Heme chaperone required for the biogenesis of c-type cytochromes. Transiently binds heme delivered by CcmC and transfers the heme to apo-cytochromes in a process facilitated by CcmF and CcmH. The polypeptide is Cytochrome c-type biogenesis protein CcmE (Phenylobacterium zucineum (strain HLK1)).